Here is a 340-residue protein sequence, read N- to C-terminus: Alcohol dehydrogenase (340 aa).

Zn(2+) contacts are provided by cysteine 40 and histidine 63.

The protein belongs to the zinc-containing alcohol dehydrogenase family. Zn(2+) serves as cofactor.

The catalysed reaction is a primary alcohol + NAD(+) = an aldehyde + NADH + H(+). The enzyme catalyses a secondary alcohol + NAD(+) = a ketone + NADH + H(+). This is Alcohol dehydrogenase (adhA) from Rhizobium meliloti (strain 1021) (Ensifer meliloti).